A 202-amino-acid chain; its full sequence is Nucleoside triphosphate pyrophosphatase (202 aa).

Asp79 functions as the Proton acceptor in the catalytic mechanism.

Belongs to the Maf family. The cofactor is a divalent metal cation.

Its subcellular location is the cytoplasm. It catalyses the reaction a ribonucleoside 5'-triphosphate + H2O = a ribonucleoside 5'-phosphate + diphosphate + H(+). It carries out the reaction a 2'-deoxyribonucleoside 5'-triphosphate + H2O = a 2'-deoxyribonucleoside 5'-phosphate + diphosphate + H(+). Nucleoside triphosphate pyrophosphatase. May have a dual role in cell division arrest and in preventing the incorporation of modified nucleotides into cellular nucleic acids. In Nitrobacter hamburgensis (strain DSM 10229 / NCIMB 13809 / X14), this protein is Nucleoside triphosphate pyrophosphatase.